The following is a 257-amino-acid chain: 3-methyl-2-oxobutanoate hydroxymethyltransferase (257 aa).

Mg(2+) is bound by residues Asp-42 and Asp-86. 3-methyl-2-oxobutanoate is bound by residues 42-43 (DS), Asp-86, and Lys-116. Glu-118 is a binding site for Mg(2+). Residue Glu-185 is the Proton acceptor of the active site.

It belongs to the PanB family. Homodecamer; pentamer of dimers. Mg(2+) serves as cofactor.

It is found in the cytoplasm. The enzyme catalyses 3-methyl-2-oxobutanoate + (6R)-5,10-methylene-5,6,7,8-tetrahydrofolate + H2O = 2-dehydropantoate + (6S)-5,6,7,8-tetrahydrofolate. The protein operates within cofactor biosynthesis; (R)-pantothenate biosynthesis; (R)-pantoate from 3-methyl-2-oxobutanoate: step 1/2. Functionally, catalyzes the reversible reaction in which hydroxymethyl group from 5,10-methylenetetrahydrofolate is transferred onto alpha-ketoisovalerate to form ketopantoate. The chain is 3-methyl-2-oxobutanoate hydroxymethyltransferase from Prochlorococcus marinus subsp. pastoris (strain CCMP1986 / NIES-2087 / MED4).